Here is a 357-residue protein sequence, read N- to C-terminus: U5 small nuclear ribonucleoprotein 40 kDa protein (357 aa).

K18 participates in a covalent cross-link: Glycyl lysine isopeptide (Lys-Gly) (interchain with G-Cter in SUMO2). Asymmetric dimethylarginine is present on R21. WD repeat units follow at residues 64 to 103 (GHEG…DNYA), 107 to 146 (GHSG…RVKR), 149 to 189 (GHTS…AIQT), 191 to 230 (QNTY…LTYT), 233 to 272 (GHAD…PKER), 283 to 322 (NFEK…ILYK), and 325 to 357 (GHAG…GEIQ). Residue K270 forms a Glycyl lysine isopeptide (Lys-Gly) (interchain with G-Cter in SUMO2) linkage.

In terms of assembly, component of the pre-catalytic and catalytic spliceosome complexes. Component of the postcatalytic spliceosome P complex. Part of the U5 snRNP complex. Interacts with PRPF8. Component of the U4/U6-U5 tri-snRNP complex composed of the U4, U6 and U5 snRNAs and at least PRPF3, PRPF4, PRPF6, PRPF8, PRPF31, SNRNP200, TXNL4A, WDR57, SNRNP40, DDX23, CD2BP2, PPIH, SNU13, EFTUD2, SART1 and USP39. Component of the minor spliceosome, which splices U12-type introns.

The protein resides in the nucleus. Functionally, required for pre-mRNA splicing as component of the activated spliceosome. Component of the U5 small nuclear ribonucleoprotein (snRNP) complex and the U4/U6-U5 tri-snRNP complex, building blocks of the spliceosome. As a component of the minor spliceosome, involved in the splicing of U12-type introns in pre-mRNAs. This is U5 small nuclear ribonucleoprotein 40 kDa protein (SNRNP40) from Homo sapiens (Human).